Consider the following 483-residue polypeptide: MGDVIVLYASPGMGHIVSMVELGKFIVHRYGPHKFSITILYTCGSIVDTASIPVYIRRISHSHPFISFRQFPRVTNNITRNISVPAITFDFIRQNDPHVRSALQEISKSATVRAFIIDLFCTSALPIGKEFNIPTYYFCTSGAAILAAFLYLPKIDEQTKTTESFKDLRDTVFEFPGWKSPLKATHMVQLVLDRNDPAYSDMIYFCSHLPKSNGIIVNTFEELEPPSVLQAIAGGLCVPDGPTPPVYYVGPLIEEEKELSKDADAAEKEDCLSWLDKQPSRSVLFLCFGSMGSFPAAQLKEIANGLEASGQRFLWVVKKPPVEEKSKQVHGVDDFDLKGVLPEGFLERTADRGMVVKSWAPQVVVLKKESVGGFVTHCGWNSVLEAVVAGVPMIAWPLYAEQHMNRNVLVTDMEIAIGVEQRDEEGGFVSGEEVERRVRELMESEGGRVLRERCKKLGEMASAALGETGSSTRNLVNFVSSIT.

His-15 (proton acceptor) is an active-site residue. His-15 is an an anthocyanidin binding site. Asp-118 (charge relay) is an active-site residue. Thr-140, Ala-360, Gln-362, His-377, Trp-380, Asn-381, Ser-382, and Glu-385 together coordinate UDP-alpha-D-glucose. Ala-400 serves as a coordination point for an anthocyanidin. 2 residues coordinate UDP-alpha-D-glucose: Glu-401 and Gln-402.

The protein belongs to the UDP-glycosyltransferase family. Highly expressed in roots and at lower levels in leaves, flowers and fruits.

The enzyme catalyses phloretin + UDP-alpha-D-glucose = phlorizin + UDP + H(+). Its function is as follows. Glycosyltransferase that possesses phloretin 2'-O-glycosyltransferase activity. Converts phloretin to phlorizin (phloretin 2'-O-glucoside), a potent antioxidant. Is specific for phloretin and does not possess glycosyltransferase activity toward caffeic acid, catechin, chlorogenic acid, 2-coumaric acid, 3-coumaric acid, 4-coumaric acid, cyanidin, 3,4-dihydroxyhydrocinnamic acid, epicatechin, 3-hydroxybenzoic acid, naringenin, 3,4-dihydroxybenzoic acid, quercetin and rutin. Can glycosylate phloretin in the presence of UDP-glucose, UDP-xylose and UDP-galactose. This chain is Phloretin 2'-O-glucosyltransferase, found in Malus domestica (Apple).